Reading from the N-terminus, the 434-residue chain is MQVRRDDDGAGGCAGDAVPGGGEGQDGVPARQPAGRVWGVSRAARATSGFKVLALGPETTGVIQRMQQLLDMDTTPFTDKIIAEYIWVGGSGIDLRSKSRTISKPVEDPSELPKWNYDGSSTGQAPGEDSEVILYPQAIFKDPFRGGNNILVICDTYTPQGEPIPTNKRHMAAQIFSDPKVTSQVPWFGIEQEYTLMQRDVNWPLGWPVGGYPGPQGPYYCAVGSDKSFGRDISDAHYKACLYAGIEISGTNGEVMPGQWEYQVGPSVGIDAGDHIWASRYILERITEQAGVVLTLDPKPIQGDWNGAGCHTNYSTLSMREDGGFDVIKKAILNLSLRHDLHIAAYGEGNERRLTGLHETASISDFSWGVANRGCSIRVGRDTEAKGKGYLEDRRPASNMDPYTVTALLAETTILWEPTLEAEALAAKKLALKV.

2 disordered regions span residues 1–33 and 101–126; these read MQVR…ARQP and TISK…GQAP. Residues 1–54 constitute a chloroplast transit peptide; that stretch reads MQVRRDDDGAGGCAGDAVPGGGEGQDGVPARQPAGRVWGVSRAARATSGFKVLA. Over residues 10 to 25 the composition is skewed to gly residues; the sequence is AGGCAGDAVPGGGEGQ. Positions 81-161 constitute a GS beta-grasp domain; sequence IIAEYIWVGG…VICDTYTPQG (81 aa). The GS catalytic domain maps to 168-434; sequence KRHMAAQIFS…LAAKKLALKV (267 aa).

This sequence belongs to the glutamine synthetase family. In terms of assembly, homooctamer.

It localises to the plastid. The protein localises to the chloroplast. It catalyses the reaction L-glutamate + NH4(+) + ATP = L-glutamine + ADP + phosphate + H(+). The light-modulated chloroplast enzyme, encoded by a nuclear gene and expressed primarily in leaves, is responsible for the reassimilation of the ammonia generated by photorespiration. The polypeptide is Glutamine synthetase leaf isozyme, chloroplastic (Hordeum vulgare (Barley)).